A 148-amino-acid polypeptide reads, in one-letter code: Large ribosomal subunit protein bL9 (148 aa).

The protein belongs to the bacterial ribosomal protein bL9 family.

Its function is as follows. Binds to the 23S rRNA. The sequence is that of Large ribosomal subunit protein bL9 from Acinetobacter baumannii (strain AB307-0294).